The following is a 159-amino-acid chain: NADH-quinone oxidoreductase subunit B (159 aa).

Positions 37, 38, 102, and 132 each coordinate [4Fe-4S] cluster.

The protein belongs to the complex I 20 kDa subunit family. In terms of assembly, NDH-1 is composed of 14 different subunits. Subunits NuoB, C, D, E, F, and G constitute the peripheral sector of the complex. It depends on [4Fe-4S] cluster as a cofactor.

It is found in the cell inner membrane. It catalyses the reaction a quinone + NADH + 5 H(+)(in) = a quinol + NAD(+) + 4 H(+)(out). In terms of biological role, NDH-1 shuttles electrons from NADH, via FMN and iron-sulfur (Fe-S) centers, to quinones in the respiratory chain. Couples the redox reaction to proton translocation (for every two electrons transferred, four hydrogen ions are translocated across the cytoplasmic membrane), and thus conserves the redox energy in a proton gradient. The sequence is that of NADH-quinone oxidoreductase subunit B from Vesicomyosocius okutanii subsp. Calyptogena okutanii (strain HA).